The following is a 206-amino-acid chain: Mediator of RNA polymerase II transcription subunit 19 (206 aa).

The interval 171–206 is disordered; sequence GTGTKTKKRKYKSNGSSMASPNTELQPDDMKRRRLE. Over residues 183–195 the composition is skewed to polar residues; it reads SNGSSMASPNTEL.

The protein belongs to the Mediator complex subunit 19 family. As to quaternary structure, component of the Mediator complex.

It localises to the nucleus. Component of the Mediator complex, a coactivator involved in the regulated transcription of nearly all RNA polymerase II-dependent genes. Mediator functions as a bridge to convey information from gene-specific regulatory proteins to the basal RNA polymerase II transcription machinery. Mediator is recruited to promoters by direct interactions with regulatory proteins and serves as a scaffold for the assembly of a functional preinitiation complex with RNA polymerase II and the general transcription factors. The protein is Mediator of RNA polymerase II transcription subunit 19 (ROX3) of Kluyveromyces lactis (strain ATCC 8585 / CBS 2359 / DSM 70799 / NBRC 1267 / NRRL Y-1140 / WM37) (Yeast).